The sequence spans 122 residues: Large ribosomal subunit protein uL14 (122 aa).

The protein belongs to the universal ribosomal protein uL14 family. In terms of assembly, part of the 50S ribosomal subunit. Forms a cluster with proteins L3 and L19. In the 70S ribosome, L14 and L19 interact and together make contacts with the 16S rRNA in bridges B5 and B8.

Functionally, binds to 23S rRNA. Forms part of two intersubunit bridges in the 70S ribosome. This chain is Large ribosomal subunit protein uL14, found in Erythrobacter litoralis (strain HTCC2594).